A 435-amino-acid chain; its full sequence is CBL-interacting protein kinase 28 (435 aa).

One can recognise a Protein kinase domain in the interval Y11–Y265. ATP-binding positions include L17–V25 and K40. The Proton acceptor role is filled by D133. The activation loop stretch occupies residues D151 to E180. The NAF domain maps to C283–G329. Positions R334–V363 are PPI.

The protein belongs to the protein kinase superfamily. CAMK Ser/Thr protein kinase family. SNF1 subfamily. Mn(2+) serves as cofactor.

The enzyme catalyses L-seryl-[protein] + ATP = O-phospho-L-seryl-[protein] + ADP + H(+). It catalyses the reaction L-threonyl-[protein] + ATP = O-phospho-L-threonyl-[protein] + ADP + H(+). Its function is as follows. CIPK serine-threonine protein kinases interact with CBL proteins. Binding of a CBL protein to the regulatory NAF domain of CIPK protein lead to the activation of the kinase in a calcium-dependent manner. The polypeptide is CBL-interacting protein kinase 28 (CIPK28) (Oryza sativa subsp. japonica (Rice)).